Here is a 336-residue protein sequence, read N- to C-terminus: Fructose-1,6-bisphosphatase class 1 (336 aa).

Residues Glu92, Asp115, Leu117, and Asp118 each contribute to the Mg(2+) site. Residues 118-121 (DGSS), Asn211, Tyr244, 262-264 (YLY), and Lys274 each bind substrate. Glu280 contributes to the Mg(2+) binding site.

The protein belongs to the FBPase class 1 family. Homotetramer. Mg(2+) serves as cofactor.

The protein localises to the cytoplasm. The catalysed reaction is beta-D-fructose 1,6-bisphosphate + H2O = beta-D-fructose 6-phosphate + phosphate. It functions in the pathway carbohydrate biosynthesis; gluconeogenesis. The polypeptide is Fructose-1,6-bisphosphatase class 1 (Vibrio atlanticus (strain LGP32) (Vibrio splendidus (strain Mel32))).